A 161-amino-acid chain; its full sequence is Putative TRAP transporter small permease protein HI_1030 (161 aa).

A run of 4 helical transmembrane segments spans residues 13–33, 51–71, 86–106, and 135–155; these read LEIL…LNVV, YLFI…NQHV, AILK…IIEG, and IAGI…IFFI.

This sequence belongs to the TRAP transporter small permease family.

It localises to the cell inner membrane. The polypeptide is Putative TRAP transporter small permease protein HI_1030 (Haemophilus influenzae (strain ATCC 51907 / DSM 11121 / KW20 / Rd)).